Consider the following 302-residue polypeptide: Ornithine carbamoyltransferase (302 aa).

Carbamoyl phosphate contacts are provided by residues 52-55 (STRT), Q79, R103, and 130-133 (HPCQ). L-ornithine is bound by residues N161, D221, and 225 to 226 (SM). Residues 261–262 (CL) and R289 each bind carbamoyl phosphate.

The protein belongs to the aspartate/ornithine carbamoyltransferase superfamily. OTCase family.

The protein resides in the cytoplasm. It carries out the reaction carbamoyl phosphate + L-ornithine = L-citrulline + phosphate + H(+). The protein operates within amino-acid biosynthesis; L-arginine biosynthesis; L-arginine from L-ornithine and carbamoyl phosphate: step 1/3. Functionally, reversibly catalyzes the transfer of the carbamoyl group from carbamoyl phosphate (CP) to the N(epsilon) atom of ornithine (ORN) to produce L-citrulline. The polypeptide is Ornithine carbamoyltransferase (Methanosarcina acetivorans (strain ATCC 35395 / DSM 2834 / JCM 12185 / C2A)).